A 474-amino-acid polypeptide reads, in one-letter code: tRNA-2-methylthio-N(6)-dimethylallyladenosine synthase (474 aa).

One can recognise an MTTase N-terminal domain in the interval 3 to 120 (QKLHIKTWGC…LPEMINQIRA (118 aa)). The [4Fe-4S] cluster site is built by C12, C49, C83, C157, C161, and C164. The Radical SAM core domain occupies 143 to 375 (KAEGPTAFVS…QQRINNQAAQ (233 aa)). Residues 378 to 441 (RAMLGTEQRV…TNSLRGDVVR (64 aa)) enclose the TRAM domain.

It belongs to the methylthiotransferase family. MiaB subfamily. Monomer. Requires [4Fe-4S] cluster as cofactor.

It is found in the cytoplasm. The catalysed reaction is N(6)-dimethylallyladenosine(37) in tRNA + (sulfur carrier)-SH + AH2 + 2 S-adenosyl-L-methionine = 2-methylsulfanyl-N(6)-dimethylallyladenosine(37) in tRNA + (sulfur carrier)-H + 5'-deoxyadenosine + L-methionine + A + S-adenosyl-L-homocysteine + 2 H(+). Catalyzes the methylthiolation of N6-(dimethylallyl)adenosine (i(6)A), leading to the formation of 2-methylthio-N6-(dimethylallyl)adenosine (ms(2)i(6)A) at position 37 in tRNAs that read codons beginning with uridine. This chain is tRNA-2-methylthio-N(6)-dimethylallyladenosine synthase, found in Mannheimia succiniciproducens (strain KCTC 0769BP / MBEL55E).